The sequence spans 373 residues: MRTAILKKVKRIVIKIGSRVLTGDENGLNHAFIARLAAETASLRQQGRQVIVVSSGAVAAGRRELGIEGRPKSIPQKQAAAAIGQSRLMRAYEEDFGRFGHKVAQILLTRDDLANRRRFLNARATLDTLLDFGVIPVINENDTVVVDEIKFGDNDNLSALVTNLAEAHLLVILTDIDGFYDSDPRANPDARLIHLVKSITRETERAAGDSGSSVGTGGMVTKLAAAKKAGQFGVPTLMLNGTVPGILTKAFAGREVGTLFLPARESLNRRKHWIAHTLRPSGRVIVDDGARTVLSRQGKSLLPSGVIRVEGEFDRGACVRVCGADGAEIARGVVDYSHAEIERILGHRSGEIEAILGYKYGDEIIHRDNLVVL.

Lys15 contacts ATP. Residues Ser55, Asp142, and Asn154 each coordinate substrate. ATP is bound by residues 174-175 (TD) and 216-222 (TGGMVTK). Positions 281-359 (SGRVIVDDGA…GEIEAILGYK (79 aa)) constitute a PUA domain.

This sequence belongs to the glutamate 5-kinase family.

It is found in the cytoplasm. It carries out the reaction L-glutamate + ATP = L-glutamyl 5-phosphate + ADP. It participates in amino-acid biosynthesis; L-proline biosynthesis; L-glutamate 5-semialdehyde from L-glutamate: step 1/2. In terms of biological role, catalyzes the transfer of a phosphate group to glutamate to form L-glutamate 5-phosphate. The polypeptide is Glutamate 5-kinase (Geobacter metallireducens (strain ATCC 53774 / DSM 7210 / GS-15)).